Consider the following 300-residue polypeptide: Tyrosine recombinase XerC (300 aa).

Positions 1 to 86 constitute a Core-binding (CB) domain; it reads MESVLDAFDQ…AVKTFTAWAV (86 aa). Residues 107–294 enclose the Tyr recombinase domain; sequence TLPAVLRQDQ…TVARLRAVHD (188 aa). Catalysis depends on residues R151, K175, H246, R249, and H272. Y281 serves as the catalytic O-(3'-phospho-DNA)-tyrosine intermediate.

The protein belongs to the 'phage' integrase family. XerC subfamily. In terms of assembly, forms a cyclic heterotetrameric complex composed of two molecules of XerC and two molecules of XerD.

It localises to the cytoplasm. Its function is as follows. Site-specific tyrosine recombinase, which acts by catalyzing the cutting and rejoining of the recombining DNA molecules. The XerC-XerD complex is essential to convert dimers of the bacterial chromosome into monomers to permit their segregation at cell division. It also contributes to the segregational stability of plasmids. The sequence is that of Tyrosine recombinase XerC from Mycobacterium sp. (strain KMS).